A 784-amino-acid chain; its full sequence is DNA ligase (784 aa).

NAD(+)-binding positions include 31–35 (DAEYD), 80–81 (SL), and E120. The active-site N6-AMP-lysine intermediate is K122. 4 residues coordinate NAD(+): R143, E180, K296, and K320. Zn(2+) is bound by residues C414, C417, C444, and C450. In terms of domain architecture, BRCT spans 701–784 (AEGLPLAGQT…AFMAEQGITL (84 aa)).

Belongs to the NAD-dependent DNA ligase family. LigA subfamily. Mg(2+) serves as cofactor. The cofactor is Mn(2+).

The catalysed reaction is NAD(+) + (deoxyribonucleotide)n-3'-hydroxyl + 5'-phospho-(deoxyribonucleotide)m = (deoxyribonucleotide)n+m + AMP + beta-nicotinamide D-nucleotide.. Its function is as follows. DNA ligase that catalyzes the formation of phosphodiester linkages between 5'-phosphoryl and 3'-hydroxyl groups in double-stranded DNA using NAD as a coenzyme and as the energy source for the reaction. It is essential for DNA replication and repair of damaged DNA. The protein is DNA ligase of Pseudomonas entomophila (strain L48).